Reading from the N-terminus, the 133-residue chain is Small ribosomal subunit protein uS8 (133 aa).

This sequence belongs to the universal ribosomal protein uS8 family. In terms of assembly, part of the 30S ribosomal subunit. Contacts proteins S5 and S12.

In terms of biological role, one of the primary rRNA binding proteins, it binds directly to 16S rRNA central domain where it helps coordinate assembly of the platform of the 30S subunit. In Chlamydia pneumoniae (Chlamydophila pneumoniae), this protein is Small ribosomal subunit protein uS8.